We begin with the raw amino-acid sequence, 429 residues long: Adenylosuccinate synthetase (429 aa).

GTP contacts are provided by residues 13–19 (GDEGKGK) and 41–43 (GHT). Residue Asp-14 is the Proton acceptor of the active site. Residues Asp-14 and Gly-41 each coordinate Mg(2+). IMP contacts are provided by residues 14-17 (DEGK), 39-42 (NAGH), Thr-130, Arg-144, Gln-225, Thr-240, and Arg-304. His-42 functions as the Proton donor in the catalytic mechanism. Residue 300 to 306 (ATTGRRR) coordinates substrate. GTP contacts are provided by residues Arg-306, 332–334 (KLD), and 417–419 (STG).

It belongs to the adenylosuccinate synthetase family. As to quaternary structure, homodimer. Requires Mg(2+) as cofactor.

It is found in the cytoplasm. It carries out the reaction IMP + L-aspartate + GTP = N(6)-(1,2-dicarboxyethyl)-AMP + GDP + phosphate + 2 H(+). It participates in purine metabolism; AMP biosynthesis via de novo pathway; AMP from IMP: step 1/2. Its function is as follows. Plays an important role in the de novo pathway of purine nucleotide biosynthesis. Catalyzes the first committed step in the biosynthesis of AMP from IMP. The protein is Adenylosuccinate synthetase of Buchnera aphidicola subsp. Baizongia pistaciae (strain Bp).